The following is a 488-amino-acid chain: N-succinylglutamate 5-semialdehyde dehydrogenase 2 (488 aa).

221-226 (GSSNTG) contributes to the NAD(+) binding site. Active-site residues include glutamate 244 and cysteine 278.

Belongs to the aldehyde dehydrogenase family. AstD subfamily.

It carries out the reaction N-succinyl-L-glutamate 5-semialdehyde + NAD(+) + H2O = N-succinyl-L-glutamate + NADH + 2 H(+). It participates in amino-acid degradation; L-arginine degradation via AST pathway; L-glutamate and succinate from L-arginine: step 4/5. Its function is as follows. Catalyzes the NAD-dependent reduction of succinylglutamate semialdehyde into succinylglutamate. The sequence is that of N-succinylglutamate 5-semialdehyde dehydrogenase 2 from Pseudoalteromonas translucida (strain TAC 125).